Here is a 245-residue protein sequence, read N- to C-terminus: Ribonuclease 3 (245 aa).

The region spanning 24–146 is the RNase III domain; that stretch reads YTVFSQKLGY…IIGAIYLESG (123 aa). Residue glutamate 59 participates in Mg(2+) binding. Aspartate 63 is an active-site residue. Positions 132 and 135 each coordinate Mg(2+). The active site involves glutamate 135. The DRBM domain occupies 173-243; that stretch reads DPKTLLQEYL…ARRAYKLAVV (71 aa).

It belongs to the ribonuclease III family. Homodimer. It depends on Mg(2+) as a cofactor.

Its subcellular location is the cytoplasm. The enzyme catalyses Endonucleolytic cleavage to 5'-phosphomonoester.. Its function is as follows. Digests double-stranded RNA. Involved in the processing of primary rRNA transcript to yield the immediate precursors to the large and small rRNAs (23S and 16S). Processes some mRNAs, and tRNAs when they are encoded in the rRNA operon. Processes pre-crRNA and tracrRNA of type II CRISPR loci if present in the organism. This is Ribonuclease 3 from Nitrosomonas eutropha (strain DSM 101675 / C91 / Nm57).